We begin with the raw amino-acid sequence, 117 residues long: Large ribosomal subunit protein bL20 (117 aa).

The protein belongs to the bacterial ribosomal protein bL20 family.

Binds directly to 23S ribosomal RNA and is necessary for the in vitro assembly process of the 50S ribosomal subunit. It is not involved in the protein synthesizing functions of that subunit. The polypeptide is Large ribosomal subunit protein bL20 (Geotalea uraniireducens (strain Rf4) (Geobacter uraniireducens)).